We begin with the raw amino-acid sequence, 185 residues long: Ribosome-recycling factor (185 aa).

The protein belongs to the RRF family.

The protein localises to the cytoplasm. Functionally, responsible for the release of ribosomes from messenger RNA at the termination of protein biosynthesis. May increase the efficiency of translation by recycling ribosomes from one round of translation to another. The sequence is that of Ribosome-recycling factor from Heliobacterium modesticaldum (strain ATCC 51547 / Ice1).